A 263-amino-acid polypeptide reads, in one-letter code: Phosphatidylglycerol--prolipoprotein diacylglyceryl transferase (263 aa).

4 consecutive transmembrane segments (helical) span residues 15–35 (ISIHWYAICIVSGLLLAVYLA), 52–72 (FILLAFPIAIVGARLYYVIFQ), 83–103 (IFAIWNGGIAIYGGLIAGAAV), and 112–132 (AIAVLDFLDIAAPGVMIAQSI). R134 provides a ligand contact to a 1,2-diacyl-sn-glycero-3-phospho-(1'-sn-glycerol). Helical transmembrane passes span 170–190 (VPTFLYESLWNLVGFSIILGL), 200–220 (GDVTSFYLIWYGLGRFVIEGM), and 230–250 (LRVSQWVSISIIILGAVLLYF).

Belongs to the Lgt family.

The protein resides in the cell membrane. The catalysed reaction is L-cysteinyl-[prolipoprotein] + a 1,2-diacyl-sn-glycero-3-phospho-(1'-sn-glycerol) = an S-1,2-diacyl-sn-glyceryl-L-cysteinyl-[prolipoprotein] + sn-glycerol 1-phosphate + H(+). It functions in the pathway protein modification; lipoprotein biosynthesis (diacylglyceryl transfer). In terms of biological role, catalyzes the transfer of the diacylglyceryl group from phosphatidylglycerol to the sulfhydryl group of the N-terminal cysteine of a prolipoprotein, the first step in the formation of mature lipoproteins. The polypeptide is Phosphatidylglycerol--prolipoprotein diacylglyceryl transferase (Streptococcus thermophilus (strain ATCC BAA-250 / LMG 18311)).